We begin with the raw amino-acid sequence, 248 residues long: UPF0246 protein RC0754 (248 aa).

This sequence belongs to the UPF0246 family.

This chain is UPF0246 protein RC0754, found in Rickettsia conorii (strain ATCC VR-613 / Malish 7).